We begin with the raw amino-acid sequence, 131 residues long: Small ribosomal subunit protein uS8 (131 aa).

It belongs to the universal ribosomal protein uS8 family. As to quaternary structure, part of the 30S ribosomal subunit. Contacts proteins S5 and S12.

Functionally, one of the primary rRNA binding proteins, it binds directly to 16S rRNA central domain where it helps coordinate assembly of the platform of the 30S subunit. This is Small ribosomal subunit protein uS8 from Thiobacillus denitrificans (strain ATCC 25259 / T1).